A 429-amino-acid polypeptide reads, in one-letter code: Glucose-1-phosphate adenylyltransferase (429 aa).

Residues G162, 177 to 178 (EK), and S209 each bind alpha-D-glucose 1-phosphate.

This sequence belongs to the bacterial/plant glucose-1-phosphate adenylyltransferase family. In terms of assembly, homotetramer.

It carries out the reaction alpha-D-glucose 1-phosphate + ATP + H(+) = ADP-alpha-D-glucose + diphosphate. The protein operates within glycan biosynthesis; glycogen biosynthesis. Activated by 3-phosphoglycerate and inhibited by phosphate. Involved in the biosynthesis of ADP-glucose, a building block required for the elongation reactions to produce glycogen. Catalyzes the reaction between ATP and alpha-D-glucose 1-phosphate (G1P) to produce pyrophosphate and ADP-Glc. The polypeptide is Glucose-1-phosphate adenylyltransferase (Nostoc sp. (strain PCC 7120 / SAG 25.82 / UTEX 2576)).